The following is a 20-amino-acid chain: Protein PR-L2 (20 aa).

The segment at 1-20 (SVFAFENEQSSTIAPARLYK) is disordered.

This sequence belongs to the BetVI family.

This chain is Protein PR-L2, found in Lupinus luteus (European yellow lupine).